The following is a 197-amino-acid chain: Phospholipid hydroperoxide glutathione peroxidase (197 aa).

S40 is subject to Phosphoserine. The active site involves U73. Residue U73 is a non-standard amino acid, selenocysteine.

This sequence belongs to the glutathione peroxidase family. Monomer. Has a tendency to form higher mass oligomers. Interacts with FUNDC1; this interaction promotes GPX4 recruitment into mitochondria through TOM/TIM complex where it is degraded by mitophagy. In terms of tissue distribution, expressed very intensively in the testis and weakly in lung, heart, and cerebellum.

Its subcellular location is the mitochondrion. The protein resides in the cytoplasm. The catalysed reaction is a hydroperoxy polyunsaturated fatty acid + 2 glutathione = a hydroxy polyunsaturated fatty acid + glutathione disulfide + H2O. It carries out the reaction 2 glutathione + H2O2 = glutathione disulfide + 2 H2O. The enzyme catalyses tert-butyl hydroperoxide + 2 glutathione = tert-butanol + glutathione disulfide + H2O. It catalyses the reaction cumene hydroperoxide + 2 glutathione = 2-phenylpropan-2-ol + glutathione disulfide + H2O. The catalysed reaction is (9S)-hydroperoxy-(10E,12Z)-octadecadienoate + 2 glutathione = (9S)-hydroxy-(10E,12Z)-octadecadienoate + glutathione disulfide + H2O. It carries out the reaction (13S)-hydroperoxy-(9Z,11E)-octadecadienoate + 2 glutathione = (13S)-hydroxy-(9Z,11E)-octadecadienoate + glutathione disulfide + H2O. The enzyme catalyses (5S)-hydroperoxy-(6E,8Z,11Z,14Z)-eicosatetraenoate + 2 glutathione = (5S)-hydroxy-(6E,8Z,11Z,14Z)-eicosatetraenoate + glutathione disulfide + H2O. It catalyses the reaction (12R)-hydroperoxy-(5Z,8Z,10E,14Z)-eicosatetraenoate + 2 glutathione = (12R)-hydroxy-(5Z,8Z,10E,14Z)-eicosatetraenoate + glutathione disulfide + H2O. The catalysed reaction is (12S)-hydroperoxy-(5Z,8Z,10E,14Z)-eicosatetraenoate + 2 glutathione = (12S)-hydroxy-(5Z,8Z,10E,14Z)-eicosatetraenoate + glutathione disulfide + H2O. It carries out the reaction (15S)-hydroperoxy-(5Z,8Z,11Z,13E)-eicosatetraenoate + 2 glutathione = (15S)-hydroxy-(5Z,8Z,11Z,13E)-eicosatetraenoate + glutathione disulfide + H2O. The enzyme catalyses (5S)-hydroperoxy-(6E,8Z,11Z,14Z,17Z)-eicosapentaenoate + 2 glutathione = (5S)-hydroxy-(6E,8Z,11Z,14Z,17Z)-eicosapentaenoate + glutathione disulfide + H2O. It catalyses the reaction (12S)-hydroperoxy-(5Z,8Z,10E,14Z,17Z)-eicosapentaenoate + 2 glutathione = (12S)-hydroxy-(5Z,8Z,10E,14Z,17Z)-eicosapentaenoate + glutathione disulfide + H2O. The catalysed reaction is (15S)-hydroperoxy-(5Z,8Z,11Z,13E,17Z)-eicosapentaenoate + 2 glutathione = (15S)-hydroxy-(5Z,8Z,11Z,13E,17Z)-eicosapentaenoate + glutathione disulfide + H2O. It carries out the reaction (15S)-hydroperoxy-(11Z,13E)-eicosadienoate + 2 glutathione = (15S)-hydroxy-(11Z,13E)-eicosadienoate + glutathione disulfide + H2O. The enzyme catalyses (17S)-hydroperoxy-(4Z,7Z,10Z,13Z,15E,19Z)-docosahexaenoate + 2 glutathione = (17S)-hydroxy-(4Z,7Z,10Z,13Z,15E,19Z)-docosahexaenoate + glutathione disulfide + H2O. It catalyses the reaction a hydroperoxy-1,2-diacyl-glycero-3-phosphocholine + 2 glutathione = a hydroxy-1,2-diacyl-glycero-3-phosphocholine + glutathione disulfide + H2O. Its function is as follows. Essential antioxidant peroxidase that directly reduces phospholipid hydroperoxide even if they are incorporated in membranes and lipoproteins. Can also reduce fatty acid hydroperoxide, cholesterol hydroperoxide and thymine hydroperoxide. Plays a key role in protecting cells from oxidative damage by preventing membrane lipid peroxidation. Required to prevent cells from ferroptosis, a non-apoptotic cell death resulting from an iron-dependent accumulation of lipid reactive oxygen species. The presence of selenocysteine (Sec) versus Cys at the active site is essential for life: it provides resistance to overoxidation and prevents cells against ferroptosis. The presence of Sec at the active site is also essential for the survival of a specific type of parvalbumin-positive interneurons, thereby preventing against fatal epileptic seizures. May be required to protect cells from the toxicity of ingested lipid hydroperoxides. Required for normal sperm development and male fertility. Essential for maturation and survival of photoreceptor cells. Plays a role in a primary T-cell response to viral and parasitic infection by protecting T-cells from ferroptosis and by supporting T-cell expansion. Plays a role of glutathione peroxidase in platelets in the arachidonic acid metabolism. Reduces hydroperoxy ester lipids formed by a 15-lipoxygenase that may play a role as down-regulator of the cellular 15-lipoxygenase pathway. Can also reduce small soluble hydroperoxides such as H2O2, cumene hydroperoxide and tert-butyl hydroperoxide. This is Phospholipid hydroperoxide glutathione peroxidase from Macaca fuscata fuscata (Japanese macaque).